The primary structure comprises 234 residues: Leucyl/phenylalanyl-tRNA--protein transferase (234 aa).

This sequence belongs to the L/F-transferase family.

It is found in the cytoplasm. It carries out the reaction N-terminal L-lysyl-[protein] + L-leucyl-tRNA(Leu) = N-terminal L-leucyl-L-lysyl-[protein] + tRNA(Leu) + H(+). The catalysed reaction is N-terminal L-arginyl-[protein] + L-leucyl-tRNA(Leu) = N-terminal L-leucyl-L-arginyl-[protein] + tRNA(Leu) + H(+). The enzyme catalyses L-phenylalanyl-tRNA(Phe) + an N-terminal L-alpha-aminoacyl-[protein] = an N-terminal L-phenylalanyl-L-alpha-aminoacyl-[protein] + tRNA(Phe). Its function is as follows. Functions in the N-end rule pathway of protein degradation where it conjugates Leu, Phe and, less efficiently, Met from aminoacyl-tRNAs to the N-termini of proteins containing an N-terminal arginine or lysine. The sequence is that of Leucyl/phenylalanyl-tRNA--protein transferase from Klebsiella pneumoniae (strain 342).